Reading from the N-terminus, the 223-residue chain is Mitochondrial cardiolipin hydrolase (223 aa).

Over 1 to 6 (MGCASS) the chain is Mitochondrial intermembrane. A helical transmembrane segment spans residues 7–24 (KEEVALTPLSDVNAAKEV). The Cytoplasmic portion of the chain corresponds to 25-223 (ADLKAQVDQL…QFDKLWDMFK (199 aa)). One can recognise a PLD phosphodiesterase domain in the interval 164-191 (TAAHMHHKFAIIDGRLLLNGSFNWTRQA). Catalysis depends on residues H169, K171, and D176.

This sequence belongs to the phospholipase D family. MitoPLD/Zucchini subfamily. As to quaternary structure, homodimer.

Its subcellular location is the mitochondrion outer membrane. Functionally, plays a critical role in PIWI-interacting RNA (piRNA) biogenesis. piRNAs provide essential protection against the activity of mobile genetic elements. piRNA-mediated transposon silencing is thus critical for maintaining genome stability. Backbone-non-specific, single strand-specific nuclease, cleaving either RNA or DNA substrates with similar affinity. Produces 5' phosphate and 3' hydroxyl termini, suggesting it could directly participate in the processing of primary piRNA transcripts. Has been proposed to act as a cardiolipin hydrolase to generate phosphatidic acid at mitochondrial surface. Although it cannot be excluded that it can act as a phospholipase in some circumstances, this activity could not be confirmed. This Chlamydomonas reinhardtii (Chlamydomonas smithii) protein is Mitochondrial cardiolipin hydrolase.